The sequence spans 173 residues: RNA pyrophosphohydrolase (173 aa).

The 144-residue stretch at 6 to 149 (GFRANVGIII…KRDVYRKVMK (144 aa)) folds into the Nudix hydrolase domain. The Nudix box motif lies at 38–59 (GGVDDGESAEEAMYRELYEEVG).

The protein belongs to the Nudix hydrolase family. RppH subfamily. Requires a divalent metal cation as cofactor.

Accelerates the degradation of transcripts by removing pyrophosphate from the 5'-end of triphosphorylated RNA, leading to a more labile monophosphorylated state that can stimulate subsequent ribonuclease cleavage. This Shewanella pealeana (strain ATCC 700345 / ANG-SQ1) protein is RNA pyrophosphohydrolase.